The sequence spans 475 residues: Sulfate adenylyltransferase subunit 1 (475 aa).

Residues 25-239 (KSLLRFLTCG…EVLETVEIQR (215 aa)) enclose the tr-type G domain. The tract at residues 34–41 (GSVDDGKS) is G1. 34–41 (GSVDDGKS) contacts GTP. The interval 92–96 (GITID) is G2. The tract at residues 113 to 116 (DTPG) is G3. Residues 113-117 (DTPGH) and 168-171 (NKMD) each bind GTP. A G4 region spans residues 168 to 171 (NKMD). The interval 206 to 208 (SAL) is G5.

Belongs to the TRAFAC class translation factor GTPase superfamily. Classic translation factor GTPase family. CysN/NodQ subfamily. Heterodimer composed of CysD, the smaller subunit, and CysN.

The catalysed reaction is sulfate + ATP + H(+) = adenosine 5'-phosphosulfate + diphosphate. The protein operates within sulfur metabolism; hydrogen sulfide biosynthesis; sulfite from sulfate: step 1/3. Its function is as follows. With CysD forms the ATP sulfurylase (ATPS) that catalyzes the adenylation of sulfate producing adenosine 5'-phosphosulfate (APS) and diphosphate, the first enzymatic step in sulfur assimilation pathway. APS synthesis involves the formation of a high-energy phosphoric-sulfuric acid anhydride bond driven by GTP hydrolysis by CysN coupled to ATP hydrolysis by CysD. The chain is Sulfate adenylyltransferase subunit 1 from Shigella sonnei (strain Ss046).